The following is a 539-amino-acid chain: MPIEFVCKIKFAEEDEKQKGNQDGDKESLIEESCSPPTKDLAGFASASSLHGINHIFVSGRLGVRQTLWALAFLVSLALFLYQAAKCAISYLEHPHVTALNEEATPEMVFPAVTICNINRFRFSALTDADIYHLANLTGLPPKNKDGHKPTDLEYPAPDMQDIFNRTGHQLEEMLKSCNFSGQNCSAEDFTVVYTRYGKCYTFNGNKTTSRKTKQGGMGNGLEIMLDIQQDDYLPIWKETNETSLEAGIRVQIHSQDEPPYIHQLGFGVSPGFQTFVSCQEQRLTYLPQPWGNCRSTSEQMIPGYDTYSISACRLRCETLEVLRECKCRMVHMPGDANICTPSDIKCVDKALALLQKSSGDTCFCETPCNLTRYGKELSMVKIPSKGSARYLSRKYDKSEDYIRDNFLVLDIFFEALNYETIEQKKAYDVAGLLGDIGGQMGLFIGASVLTILEILDYVYEVIKHRLERLLRPQRDDKKQTQQQQQASTVATVNLEEMKAKDSSEMSRSHSEGAYANTILPNHHHHHRTHHRVSEDFAC.

Residues 1–68 (MPIEFVCKIK…SGRLGVRQTL (68 aa)) are Cytoplasmic-facing. The chain crosses the membrane as a helical span at residues 69 to 89 (WALAFLVSLALFLYQAAKCAI). At 90 to 432 (SYLEHPHVTA…EQKKAYDVAG (343 aa)) the chain is on the extracellular side. Intrachain disulfides connect C116–C200 and C178–C185. 6 N-linked (GlcNAc...) asparagine glycosylation sites follow: N136, N165, N179, N184, N206, and N241. Cystine bridges form between C294–C369, C313–C365, C317–C363, C326–C347, and C328–C340. N370 carries N-linked (GlcNAc...) asparagine glycosylation. Residues 433-453 (LLGDIGGQMGLFIGASVLTIL) form a helical membrane-spanning segment. A GAS motif; ion selectivity filter motif is present at residues 446–448 (GAS). The Cytoplasmic segment spans residues 454-539 (EILDYVYEVI…HHRVSEDFAC (86 aa)). A disordered region spans residues 474–494 (QRDDKKQTQQQQQASTVATVN).

It belongs to the amiloride-sensitive sodium channel (TC 1.A.6) family. ASIC4 subfamily. In terms of assembly, homotrimer. Heterotrimer; with other ASIC proteins producing functional channels. Expressed in central nervous system.

It localises to the cell membrane. It catalyses the reaction Na(+)(in) = Na(+)(out). Inhibited by the diuretic drug amiloride. Could form pH-gated trimeric sodium channels and function as a postsynaptic excitatory receptors in the nervous system. The chain is Acid-sensing ion channel 4-A from Danio rerio (Zebrafish).